A 425-amino-acid polypeptide reads, in one-letter code: Serine hydroxymethyltransferase (425 aa).

(6S)-5,6,7,8-tetrahydrofolate contacts are provided by residues leucine 124 and 128 to 130 (GHL). Lysine 233 carries the post-translational modification N6-(pyridoxal phosphate)lysine.

The protein belongs to the SHMT family. In terms of assembly, homodimer. Pyridoxal 5'-phosphate is required as a cofactor.

The protein localises to the cytoplasm. The catalysed reaction is (6R)-5,10-methylene-5,6,7,8-tetrahydrofolate + glycine + H2O = (6S)-5,6,7,8-tetrahydrofolate + L-serine. It functions in the pathway one-carbon metabolism; tetrahydrofolate interconversion. The protein operates within amino-acid biosynthesis; glycine biosynthesis; glycine from L-serine: step 1/1. Functionally, catalyzes the reversible interconversion of serine and glycine with tetrahydrofolate (THF) serving as the one-carbon carrier. This reaction serves as the major source of one-carbon groups required for the biosynthesis of purines, thymidylate, methionine, and other important biomolecules. Also exhibits THF-independent aldolase activity toward beta-hydroxyamino acids, producing glycine and aldehydes, via a retro-aldol mechanism. The chain is Serine hydroxymethyltransferase from Clavibacter michiganensis subsp. michiganensis (strain NCPPB 382).